We begin with the raw amino-acid sequence, 594 residues long: DNA polymerase epsilon subunit B (594 aa).

This sequence belongs to the DNA polymerase epsilon subunit B family. Heterotetramer. Consists of four subunits: pol2, dpb2, dpb3 and dpb4. Interacts with dpb3.

It localises to the nucleus. Functionally, as accessory component of the DNA polymerase epsilon (DNA polymerase II) participates in chromosomal DNA replication. The chain is DNA polymerase epsilon subunit B (dpb2) from Schizosaccharomyces pombe (strain 972 / ATCC 24843) (Fission yeast).